Here is a 345-residue protein sequence, read N- to C-terminus: L-rhamnose-proton symporter (345 aa).

10 consecutive transmembrane segments (helical) span residues 4-24 (AITMGILWHLIGAASAACFYA), 38-58 (WSVGGVVSWLILPWVVSALLL), 68-88 (FSAATLLPVFLFGAMWGIGNI), 101-121 (MGIGIAIGITLIVGTLMTPLL), 131-151 (TAGGRMTLLGVFVALVGVAIV), 175-195 (LVLAVLCGVFSAGMSFAMDAA), 214-234 (LPSYVVIMGGGALINLGFCFI), 259-279 (VLLSALGGLMWYLQFFFYAWG), 290-310 (ISWMLHMSFYVLCGGIVGLLL), and 323-343 (VLSLGCVVIIVAANIVGLGMA).

The protein belongs to the L-rhamnose transporter (TC 2.A.7.6) family.

The protein resides in the cell inner membrane. The enzyme catalyses L-rhamnopyranose(in) + H(+)(in) = L-rhamnopyranose(out) + H(+)(out). Uptake of L-rhamnose across the cytoplasmic membrane with the concomitant transport of protons into the cell (symport system). The chain is L-rhamnose-proton symporter from Cronobacter sakazakii (strain ATCC BAA-894) (Enterobacter sakazakii).